The following is a 159-amino-acid chain: MNIKIVCVGKLKEKYFKDGIAEYVKRMGRFAKVKIIQVPDEKAPEKLSPAEMEQVKEIEGKRILDKIKDKEYVYVTAIKGKERTSEDFAKELADLTTYGHSDITFVIGGSLGTSNAVNKRADDLISFGKFTMPHQLMRLVLVEQIYRAFMINSGSPYHK.

Gly-108 lines the S-adenosyl-L-methionine pocket.

Belongs to the RNA methyltransferase RlmH family. As to quaternary structure, homodimer.

Its subcellular location is the cytoplasm. It carries out the reaction pseudouridine(1915) in 23S rRNA + S-adenosyl-L-methionine = N(3)-methylpseudouridine(1915) in 23S rRNA + S-adenosyl-L-homocysteine + H(+). Specifically methylates the pseudouridine at position 1915 (m3Psi1915) in 23S rRNA. The protein is Ribosomal RNA large subunit methyltransferase H of Lactobacillus gasseri (strain ATCC 33323 / DSM 20243 / BCRC 14619 / CIP 102991 / JCM 1131 / KCTC 3163 / NCIMB 11718 / NCTC 13722 / AM63).